Here is a 374-residue protein sequence, read N- to C-terminus: Putative serine/threonine-protein kinase ZK507.3 (374 aa).

In terms of domain architecture, Protein kinase spans 25–296; it reads WKVIVELGKG…CKLTLKEPLV (272 aa). ATP is bound by residues 31 to 39 and Lys60; that span reads LGKGGYGTV. The active-site Proton acceptor is the Asp158. The segment at 302–374 is disordered; that stretch reads NDNESGSTPT…KTRNKKPSRK (73 aa). Low complexity predominate over residues 306-324; it reads SGSTPTTSATACSPSSSTG. Over residues 334–343 the composition is skewed to polar residues; the sequence is IASNIDQKSI. Basic residues predominate over residues 364-374; it reads TKTRNKKPSRK.

Belongs to the protein kinase superfamily. Ser/Thr protein kinase family.

The enzyme catalyses L-seryl-[protein] + ATP = O-phospho-L-seryl-[protein] + ADP + H(+). The catalysed reaction is L-threonyl-[protein] + ATP = O-phospho-L-threonyl-[protein] + ADP + H(+). This chain is Putative serine/threonine-protein kinase ZK507.3, found in Caenorhabditis elegans.